Consider the following 519-residue polypeptide: Baeyer-Villiger monooxygenase (519 aa).

Residues glutamate 41, 49–52 (TWRD), aspartate 61, tyrosine 67, and valine 110 each bind FAD. An NADP(+)-binding site is contributed by 59-61 (ACD). NADP(+)-binding positions include 183–189 (TGASAIQ), 206–207 (RT), and 292–293 (KR). Position 399 (methionine 399) interacts with FAD. The tract at residues 499–519 (GAKAAEADTGADTGADAEVSA) is disordered.

This sequence belongs to the FAD-binding monooxygenase family. The cofactor is FAD.

Functionally, catalyzes a Baeyer-Villiger oxidation reaction, i.e. the insertion of an oxygen atom into a carbon-carbon bond adjacent to a carbonyl, which converts ketones to esters or lactones using NADPH and/or NADH as an electron donor. Thus, can convert bicyclo[3.2.0]hept-2-en-6-one into the oxidative lactone products 2-oxabicyclo[3.3.0]oct-6-en-3-one and 3-oxabicyclo[3.3.0]oct-6-en-2-one. Is also able to catalyze the sulfoxidation of methyl phenyl sulfide (thioanisole). This chain is Baeyer-Villiger monooxygenase, found in Streptomyces coelicolor (strain ATCC BAA-471 / A3(2) / M145).